A 564-amino-acid polypeptide reads, in one-letter code: Proline--tRNA ligase (564 aa).

This sequence belongs to the class-II aminoacyl-tRNA synthetase family. ProS type 1 subfamily. Homodimer.

Its subcellular location is the cytoplasm. The enzyme catalyses tRNA(Pro) + L-proline + ATP = L-prolyl-tRNA(Pro) + AMP + diphosphate. Functionally, catalyzes the attachment of proline to tRNA(Pro) in a two-step reaction: proline is first activated by ATP to form Pro-AMP and then transferred to the acceptor end of tRNA(Pro). As ProRS can inadvertently accommodate and process non-cognate amino acids such as alanine and cysteine, to avoid such errors it has two additional distinct editing activities against alanine. One activity is designated as 'pretransfer' editing and involves the tRNA(Pro)-independent hydrolysis of activated Ala-AMP. The other activity is designated 'posttransfer' editing and involves deacylation of mischarged Ala-tRNA(Pro). The misacylated Cys-tRNA(Pro) is not edited by ProRS. The sequence is that of Proline--tRNA ligase from Coxiella burnetii (strain RSA 331 / Henzerling II).